A 304-amino-acid chain; its full sequence is MIRKTIILLLFIIVSITWGTTFIAIRIASDTIPPLCITGMRFLLASFFLIFLCFYTKTPLLFPSNKKIFQLIICIFYFSLPFLLILYGGRYVNSTIASVIFAIMPIIVLFLSFIFFNKKLYFFQFIGLVLAIIFLSIILFKEIELGDEKTIKGVIALLLAMTSHAIIYLYSKEKYSNISILTFNALPSLLSGLFFLVISNILEHPKFDNFSNISILATFYLSYFSGVFGILSYFYLQKKVSAFQASTIFFIFPIINLMLEEFVWGNSIGIDQLQLIVFLMSSILITIFPFDLKNFMRFIKNFKK.

Helical transmembrane passes span 5–25 (TIIL…FIAI), 42–62 (FLLA…PLLF), 68–88 (IFQL…ILYG), 96–116 (IASV…FIFF), 120–140 (LYFF…IILF), 150–170 (TIKG…IYLY), 178–198 (ISIL…FLVI), 215–235 (ILAT…SYFY), 245–265 (ASTI…FVWG), and 268–288 (IGID…ITIF). EamA domains lie at 16 to 140 (ITWG…IILF) and 162 to 288 (TSHA…ITIF).

Belongs to the EamA transporter family.

The protein localises to the cell membrane. This is an uncharacterized protein from Buchnera aphidicola subsp. Schlechtendalia chinensis.